The following is a 449-amino-acid chain: UDP-N-acetylmuramoylalanine--D-glutamate ligase (449 aa).

Residue 118 to 124 participates in ATP binding; that stretch reads GTNGKTT.

This sequence belongs to the MurCDEF family.

The protein resides in the cytoplasm. The enzyme catalyses UDP-N-acetyl-alpha-D-muramoyl-L-alanine + D-glutamate + ATP = UDP-N-acetyl-alpha-D-muramoyl-L-alanyl-D-glutamate + ADP + phosphate + H(+). Its pathway is cell wall biogenesis; peptidoglycan biosynthesis. Cell wall formation. Catalyzes the addition of glutamate to the nucleotide precursor UDP-N-acetylmuramoyl-L-alanine (UMA). This chain is UDP-N-acetylmuramoylalanine--D-glutamate ligase, found in Staphylococcus aureus (strain MRSA252).